The sequence spans 353 residues: Casein kinase II subunit alpha (353 aa).

The Protein kinase domain maps to 39–324 (YQLVRKLGRG…AREAMDHPYF (286 aa)). ATP is bound by residues 45-53 (LGRGKYSEV) and K68. The Proton acceptor role is filled by D156. A disordered region spans residues 334-353 (MVSSNSPTPNALQGPISTTE).

It belongs to the protein kinase superfamily. Ser/Thr protein kinase family. CK2 subfamily. Tetramer of two alpha and two beta chains.

The enzyme catalyses L-seryl-[protein] + ATP = O-phospho-L-seryl-[protein] + ADP + H(+). It carries out the reaction L-threonyl-[protein] + ATP = O-phospho-L-threonyl-[protein] + ADP + H(+). In terms of biological role, casein kinases are operationally defined by their preferential utilization of acidic proteins such as caseins as substrates. The alpha chain contains the catalytic site. May participate in Wnt signaling. This Spodoptera frugiperda (Fall armyworm) protein is Casein kinase II subunit alpha.